A 363-amino-acid polypeptide reads, in one-letter code: 3-dehydroquinate synthase (363 aa).

NAD(+) is bound by residues 134 to 135 (TT), K147, K156, and 174 to 177 (TLKT). Positions 189, 254, and 271 each coordinate Zn(2+).

Belongs to the sugar phosphate cyclases superfamily. Dehydroquinate synthase family. The cofactor is Co(2+). Requires Zn(2+) as cofactor. NAD(+) serves as cofactor.

It is found in the cytoplasm. It carries out the reaction 7-phospho-2-dehydro-3-deoxy-D-arabino-heptonate = 3-dehydroquinate + phosphate. The protein operates within metabolic intermediate biosynthesis; chorismate biosynthesis; chorismate from D-erythrose 4-phosphate and phosphoenolpyruvate: step 2/7. Functionally, catalyzes the conversion of 3-deoxy-D-arabino-heptulosonate 7-phosphate (DAHP) to dehydroquinate (DHQ). The sequence is that of 3-dehydroquinate synthase from Prochlorococcus marinus (strain MIT 9515).